A 350-amino-acid chain; its full sequence is Ion-translocating oxidoreductase complex subunit D (350 aa).

The next 5 helical transmembrane spans lie at 20–40, 42–62, 68–88, 89–109, and 123–143; these read IMML…WFFG, GTLF…AAVL, PIAA…LAVS, IPPL…VIIA, and PAMI…TSWL. Thr187 bears the FMN phosphoryl threonine mark. 5 helical membrane-spanning segments follow: residues 215-235, 244-264, 267-287, 301-321, and 322-342; these read LAGA…VWLL, IPVS…AFAG, LASP…FFIL, LIFG…GGYP, and DGVA…DYYT.

The protein belongs to the NqrB/RnfD family. In terms of assembly, the complex is composed of six subunits: RnfA, RnfB, RnfC, RnfD, RnfE and RnfG. It depends on FMN as a cofactor.

Its subcellular location is the cell inner membrane. Its function is as follows. Part of a membrane-bound complex that couples electron transfer with translocation of ions across the membrane. The chain is Ion-translocating oxidoreductase complex subunit D from Citrobacter koseri (strain ATCC BAA-895 / CDC 4225-83 / SGSC4696).